Reading from the N-terminus, the 907-residue chain is Protein translocase subunit SecA (907 aa).

Residues Gln-87, 105 to 109, and Asp-512 contribute to the ATP site; that span reads GEGKT. Residues 834 to 907 form a disordered region; it reads QSDVDDMEQR…KYKQCHGKLS (74 aa). The span at 840–856 shows a compositional bias: basic and acidic residues; the sequence is MEQRRREEEAKIQRDYQ. Residues 865–876 show a composition bias toward polar residues; sequence DESQASSDNTPK. Over residues 878–887 the composition is skewed to basic and acidic residues; sequence MIREGDKVGR. Zn(2+) is bound by residues Cys-891, Cys-893, Cys-902, and His-903. The segment covering 897–907 has biased composition (basic residues); it reads KKYKQCHGKLS.

This sequence belongs to the SecA family. In terms of assembly, monomer and homodimer. Part of the essential Sec protein translocation apparatus which comprises SecA, SecYEG and auxiliary proteins SecDF-YajC and YidC. Requires Zn(2+) as cofactor.

It is found in the cell inner membrane. It localises to the cytoplasm. It catalyses the reaction ATP + H2O + cellular proteinSide 1 = ADP + phosphate + cellular proteinSide 2.. Its function is as follows. Part of the Sec protein translocase complex. Interacts with the SecYEG preprotein conducting channel. Has a central role in coupling the hydrolysis of ATP to the transfer of proteins into and across the cell membrane, serving both as a receptor for the preprotein-SecB complex and as an ATP-driven molecular motor driving the stepwise translocation of polypeptide chains across the membrane. This chain is Protein translocase subunit SecA, found in Shewanella denitrificans (strain OS217 / ATCC BAA-1090 / DSM 15013).